Reading from the N-terminus, the 1037-residue chain is Nucleoporin NUP120 (1037 aa).

Leucine-zipper regions lie at residues 131–152 and 290–311; these read LQLP…WFHL and LLPL…SGIL. T417 carries the post-translational modification Phosphothreonine.

Component of the nuclear pore complex (NPC). NPC constitutes the exclusive means of nucleocytoplasmic transport. NPCs allow the passive diffusion of ions and small molecules and the active, nuclear transport receptor-mediated bidirectional transport of macromolecules such as proteins, RNAs, ribonucleoparticles (RNPs), and ribosomal subunits across the nuclear envelope. Due to its 8-fold rotational symmetry, all subunits are present with 8 copies or multiples thereof. NUP120 is part of the heptameric 0.5 MDa autoassembling NUP84 NPC subcomplex (NUP84, NUP85, NUP120, NUP133, NUP145C, SEC13 and SEH1).

Its subcellular location is the nucleus. The protein localises to the nuclear pore complex. The protein resides in the nucleus membrane. In terms of biological role, functions as a component of the nuclear pore complex (NPC). NPC components, collectively referred to as nucleoporins (NUPs), can play the role of both NPC structural components and of docking or interaction partners for transiently associated nuclear transport factors. NUP120 is involved in nuclear poly(A)+ RNA and pre-ribosome export, in GSP1 nuclear import, in NPC assembly and distribution, as well as in nuclear envelope organization. The chain is Nucleoporin NUP120 (NUP120) from Saccharomyces cerevisiae (strain ATCC 204508 / S288c) (Baker's yeast).